A 168-amino-acid chain; its full sequence is uncharacterized protein (168 aa).

A disordered region spans residues 1 to 52; that stretch reads MVLGLASFPESLSSQSETATQPRRPSVKWDLGSDYRKGTEETTASGSNFRRE. The segment covering 10 to 23 has biased composition (polar residues); it reads ESLSSQSETATQPR. The span at 31-40 shows a compositional bias: basic and acidic residues; it reads LGSDYRKGTE.

This is an uncharacterized protein from Mus musculus (Mouse).